The primary structure comprises 258 residues: Phosphate import ATP-binding protein PstB 3 (258 aa).

The ABC transporter domain maps to 10 to 253 (MTARSLAVHY…PANSLTQGYI (244 aa)). ATP is bound at residue 42-49 (GPSGCGKS).

It belongs to the ABC transporter superfamily. Phosphate importer (TC 3.A.1.7) family. As to quaternary structure, the complex is composed of two ATP-binding proteins (PstB), two transmembrane proteins (PstC and PstA) and a solute-binding protein (PstS).

It is found in the cell inner membrane. It carries out the reaction phosphate(out) + ATP + H2O = ADP + 2 phosphate(in) + H(+). Part of the ABC transporter complex PstSACB involved in phosphate import. Responsible for energy coupling to the transport system. This is Phosphate import ATP-binding protein PstB 3 from Paramagnetospirillum magneticum (strain ATCC 700264 / AMB-1) (Magnetospirillum magneticum).